Here is a 317-residue protein sequence, read N- to C-terminus: MEEDCEFRHWDELIPDALGLIFSHLPLQEVLTVVPRVCKAWNRAVTGPYCWQEIDIELWSNRFHQSDHLDRMLEMLIPRSAGSLRKLSVTGLRNDSIFSFIAQHAGSLKTLKVPRSGLTNSGVVNVAEKLSSLTFLDLSYCCKIGPEAIQAIGKHCKSLREFCRNMHPLDVASVVSHDDEAYAIANTMPKLKRLEIAYHRVSTEGVLKILSCCVFLEFLELRGCWDVQLDNKFFKEKFPDMKVLGPRVIGFYDMINDWEDCCSDYFSDGSDYLAWEFFEDGVMGEFYEDEFEHGWDDNFYAENAVLDMEPHIWPPSP.

In terms of domain architecture, F-box spans 7-54 (FRHWDELIPDALGLIFSHLPLQEVLTVVPRVCKAWNRAVTGPYCWQEI).

As to quaternary structure, part of a SCF (SKP1-cullin-F-box) protein ligase complex. Interacts with CUL1, CUL2 and SPK1B/ASK2.

Its subcellular location is the nucleus. The protein operates within protein modification; protein ubiquitination. Its function is as follows. Component of SCF(ASK-cullin-F-box) E3 ubiquitin ligase complexes, which may mediate the ubiquitination and subsequent proteasomal degradation of target proteins. In Arabidopsis thaliana (Mouse-ear cress), this protein is F-box protein FBW2 (FBW2).